Here is a 629-residue protein sequence, read N- to C-terminus: Glycerol-3-phosphate dehydrogenase SDP6, mitochondrial (629 aa).

Residues 1–48 (MSLASIRRLAAGAAVIAAASGGAVYLSPSVASSDKGGGPILDSLRRRL) constitute a mitochondrion transit peptide. 75–103 (DVLVIGGGATGSGVALDAVTRGLRVGLVE) serves as a coordination point for FAD.

It belongs to the FAD-dependent glycerol-3-phosphate dehydrogenase family. FAD serves as cofactor. Expressed in germinating seedlings. Also detected in roots, leaves, flowers, developing siliques and germinating seeds.

Its subcellular location is the mitochondrion inner membrane. It catalyses the reaction a quinone + sn-glycerol 3-phosphate = dihydroxyacetone phosphate + a quinol. It functions in the pathway polyol metabolism; glycerol degradation via glycerol kinase pathway; glycerone phosphate from sn-glycerol 3-phosphate (anaerobic route): step 1/1. Required for glycerol catabolism and involved in NADH/NAD(+) homeostasis. Essential for postgerminative growth and seedling establishment. The sequence is that of Glycerol-3-phosphate dehydrogenase SDP6, mitochondrial from Arabidopsis thaliana (Mouse-ear cress).